Here is a 269-residue protein sequence, read N- to C-terminus: MRIDVVSIFPEYLAPLELSLIGKARQDGILDLHVHDLRSFTTDRHRTVDDTPYGGGAGMVMKPEPWSQALTAVAEARRGHQGKPVLIVPSPAGERFTQALAHELAGEEHLAFACGRYEGIDERVIEWAGEHFDVRPVSLGDYVLNGGEVAVLAMVEAVGRLLPGVVGNPESLVEESHSDGLLEYPVYTKPAVWRDREVPAILLSGNHGKIAQWRRHEQFRRTSERRPDLLEVFDAGKLPKADRLALQELGYDIVDGRPVRRQGTAEPAG.

S-adenosyl-L-methionine is bound by residues G115 and 139–144 (LGDYVL).

Belongs to the RNA methyltransferase TrmD family. In terms of assembly, homodimer.

The protein localises to the cytoplasm. The enzyme catalyses guanosine(37) in tRNA + S-adenosyl-L-methionine = N(1)-methylguanosine(37) in tRNA + S-adenosyl-L-homocysteine + H(+). In terms of biological role, specifically methylates guanosine-37 in various tRNAs. The polypeptide is tRNA (guanine-N(1)-)-methyltransferase (Pseudarthrobacter chlorophenolicus (strain ATCC 700700 / DSM 12829 / CIP 107037 / JCM 12360 / KCTC 9906 / NCIMB 13794 / A6) (Arthrobacter chlorophenolicus)).